The sequence spans 66 residues: Small ribosomal subunit protein bS21B (66 aa).

The disordered stretch occupies residues 38–66 (YVKPTQKRKIAKKAAISKAKKEARRSYSY).

This sequence belongs to the bacterial ribosomal protein bS21 family.

The polypeptide is Small ribosomal subunit protein bS21B (Francisella tularensis subsp. tularensis (strain SCHU S4 / Schu 4)).